The following is a 255-amino-acid chain: Acetyl-coenzyme A carboxylase carboxyl transferase subunit alpha (255 aa).

Residues 1-235 (MNIAKIVREA…KKELQTELAR (235 aa)) enclose the CoA carboxyltransferase C-terminal domain.

It belongs to the AccA family. As to quaternary structure, acetyl-CoA carboxylase is a heterohexamer composed of biotin carboxyl carrier protein (AccB), biotin carboxylase (AccC) and two subunits each of ACCase subunit alpha (AccA) and ACCase subunit beta (AccD).

Its subcellular location is the cytoplasm. The enzyme catalyses N(6)-carboxybiotinyl-L-lysyl-[protein] + acetyl-CoA = N(6)-biotinyl-L-lysyl-[protein] + malonyl-CoA. It functions in the pathway lipid metabolism; malonyl-CoA biosynthesis; malonyl-CoA from acetyl-CoA: step 1/1. Functionally, component of the acetyl coenzyme A carboxylase (ACC) complex. First, biotin carboxylase catalyzes the carboxylation of biotin on its carrier protein (BCCP) and then the CO(2) group is transferred by the carboxyltransferase to acetyl-CoA to form malonyl-CoA. This chain is Acetyl-coenzyme A carboxylase carboxyl transferase subunit alpha, found in Streptococcus pneumoniae serotype 2 (strain D39 / NCTC 7466).